We begin with the raw amino-acid sequence, 388 residues long: Yellow-related salivary protein SP03 (388 aa).

The first 18 residues, 1-18 (MKIFLCLIAVVSLQGVLA), serve as a signal peptide directing secretion. N29 carries N-linked (GlcNAc...) asparagine glycosylation.

The protein belongs to the major royal jelly protein family. As to expression, female salivary gland (at protein level).

It is found in the secreted. Its function is as follows. Probably modulates blood feeding of sand flies on vertebrate species by binding and sequestering different mediators involved in the host response. Binds biogenic amines. Binds noradrenaline with medium affinity. Binds octopamine with low affinity. Poorly binds histamine, adrenaline and serotonin. The protein is Yellow-related salivary protein SP03 of Phlebotomus perniciosus (Phlebotomine sand fly).